A 165-amino-acid chain; its full sequence is 6,7-dimethyl-8-ribityllumazine synthase (165 aa).

Residues Phe22, 56–58 (SME), and 80–82 (AVI) each bind 5-amino-6-(D-ribitylamino)uracil. 85–86 (ET) is a binding site for (2S)-2-hydroxy-3-oxobutyl phosphate. Catalysis depends on His88, which acts as the Proton donor. Residue Phe113 coordinates 5-amino-6-(D-ribitylamino)uracil. Arg127 contributes to the (2S)-2-hydroxy-3-oxobutyl phosphate binding site.

Belongs to the DMRL synthase family.

The catalysed reaction is (2S)-2-hydroxy-3-oxobutyl phosphate + 5-amino-6-(D-ribitylamino)uracil = 6,7-dimethyl-8-(1-D-ribityl)lumazine + phosphate + 2 H2O + H(+). The protein operates within cofactor biosynthesis; riboflavin biosynthesis; riboflavin from 2-hydroxy-3-oxobutyl phosphate and 5-amino-6-(D-ribitylamino)uracil: step 1/2. Its function is as follows. Catalyzes the formation of 6,7-dimethyl-8-ribityllumazine by condensation of 5-amino-6-(D-ribitylamino)uracil with 3,4-dihydroxy-2-butanone 4-phosphate. This is the penultimate step in the biosynthesis of riboflavin. This chain is 6,7-dimethyl-8-ribityllumazine synthase, found in Thermotoga petrophila (strain ATCC BAA-488 / DSM 13995 / JCM 10881 / RKU-1).